Here is a 1201-residue protein sequence, read N- to C-terminus: Kinesin-like protein costa (1201 aa).

Residues 4–391 (PIQVAVRIFP…LQFAFKVQCV (388 aa)) form the Kinesin motor domain. The interval 23–92 (SFGPTEPKKD…NGNDSGQKDY (70 aa)) is disordered. Positions 28-56 (EPKKDAQAVDEGADSKDSEAQVPAAEKDN) are enriched in basic and acidic residues. A compositionally biased stretch (polar residues) spans 57-75 (PSISETDPNGNAEQDSAAD). ATP is bound at residue 175–182 (GQRGQGKS). Disordered stretches follow at residues 502–536 (AEEP…PDLD), 565–606 (HPKA…GASL), and 618–639 (ASQQ…ESSS). Residues 510–521 (SEAANSESPNSD) show a composition bias toward low complexity. 2 positions are modified to phosphoserine: Ser599 and Ser605. Coiled coils occupy residues 652 to 821 (AATA…ELVK) and 968 to 1001 (TKVI…ERVL).

It belongs to the TRAFAC class myosin-kinesin ATPase superfamily. Kinesin family. KIF27 subfamily. As to quaternary structure, homodimer (Potential). Binds microtubules. Interacts with ci, smo, sgg, CkIalpha and protein kinase A catalytic subunit. Interacts (via kinesin motor domain) with Ubr3. Post-translationally, polyubiquitinated by Ubr3, which leads to proteasomal degradation.

It localises to the cytoplasm. The protein localises to the cytoskeleton. In terms of biological role, regulates cubitus interruptus (ci) processing by recruiting multiple kinases to promote its efficient phosphorylation. Scaffolds multiple kinases and ci into proximity to promote its hyperphosphorylation, which then targets it for SCFSlimb/proteasome-mediated processing to generate its repressor form. Hh signaling inhibits ci phosphorylation by interfering with the cos-ci-kinases complex formation. Negatively regulates hh-signaling pathways during various processes, including photoreceptor differentiation. May negatively regulate a hh-signaling pathway which functions in the intestinal immune response to bacterial uracil by activating the Duox-dependent production of reactive oxygen species (ROS). This chain is Kinesin-like protein costa (cos), found in Drosophila melanogaster (Fruit fly).